The primary structure comprises 167 residues: 3-isopropylmalate dehydratase small subunit (167 aa).

Belongs to the LeuD family. LeuD type 2 subfamily. Heterodimer of LeuC and LeuD.

The enzyme catalyses (2R,3S)-3-isopropylmalate = (2S)-2-isopropylmalate. Its pathway is amino-acid biosynthesis; L-leucine biosynthesis; L-leucine from 3-methyl-2-oxobutanoate: step 2/4. Catalyzes the isomerization between 2-isopropylmalate and 3-isopropylmalate, via the formation of 2-isopropylmaleate. This is 3-isopropylmalate dehydratase small subunit from Sulfurimonas denitrificans (strain ATCC 33889 / DSM 1251) (Thiomicrospira denitrificans (strain ATCC 33889 / DSM 1251)).